We begin with the raw amino-acid sequence, 439 residues long: ATP-dependent protease ATPase subunit HslU (439 aa).

ATP contacts are provided by residues Ile17, 59–64 (GVGKTE), Asp251, Glu317, and Arg389.

Belongs to the ClpX chaperone family. HslU subfamily. As to quaternary structure, a double ring-shaped homohexamer of HslV is capped on each side by a ring-shaped HslU homohexamer. The assembly of the HslU/HslV complex is dependent on binding of ATP.

Its subcellular location is the cytoplasm. Its function is as follows. ATPase subunit of a proteasome-like degradation complex; this subunit has chaperone activity. The binding of ATP and its subsequent hydrolysis by HslU are essential for unfolding of protein substrates subsequently hydrolyzed by HslV. HslU recognizes the N-terminal part of its protein substrates and unfolds these before they are guided to HslV for hydrolysis. In Campylobacter jejuni subsp. jejuni serotype O:2 (strain ATCC 700819 / NCTC 11168), this protein is ATP-dependent protease ATPase subunit HslU.